The primary structure comprises 367 residues: Heat-inducible transcription repressor HrcA (367 aa).

The protein belongs to the HrcA family.

Functionally, negative regulator of class I heat shock genes (grpE-dnaK-dnaJ and groELS operons). Prevents heat-shock induction of these operons. This chain is Heat-inducible transcription repressor HrcA, found in Acaryochloris marina (strain MBIC 11017).